Consider the following 137-residue polypeptide: Putative pre-16S rRNA nuclease (137 aa).

The protein belongs to the YqgF nuclease family.

It is found in the cytoplasm. Functionally, could be a nuclease involved in processing of the 5'-end of pre-16S rRNA. The protein is Putative pre-16S rRNA nuclease of Clostridium botulinum (strain Alaska E43 / Type E3).